We begin with the raw amino-acid sequence, 242 residues long: UPF0246 protein SPCG_1533 (242 aa).

The protein belongs to the UPF0246 family.

The sequence is that of UPF0246 protein SPCG_1533 from Streptococcus pneumoniae (strain CGSP14).